A 468-amino-acid chain; its full sequence is Transcription factor ste11 (468 aa).

The tract at residues 1–21 (MSASLTAEQKDQKSSVKRPLN) is disordered. A DNA-binding region (HMG box) is located at residues 16 to 80 (VKRPLNSFML…KHMLENPEYK (65 aa)). Thr173 carries the post-translational modification Phosphothreonine. Phosphoserine occurs at positions 209, 211, and 218. 2 stretches are compositionally biased toward polar residues: residues 249–263 (PSLEANLPQNSSNCS) and 274–285 (GTVSEQSNSDSP). Residues 249–290 (PSLEANLPQNSSNCSARRVPKFDSKGTVSEQSNSDSPELSAD) are disordered.

Phosphorylation results in inactivation.

It is found in the nucleus. The protein resides in the cytoplasm. Key transcription factor for sexual development. Activates the transcription of the matp, matm, mei2, mfm, ste6 and rgs1 genes. Binds specifically to a DNA fragment carrying a 10-base motif 5'-TTCTTTGTTY-3'. The sequence is that of Transcription factor ste11 (ste11) from Schizosaccharomyces pombe (strain 972 / ATCC 24843) (Fission yeast).